The primary structure comprises 101 residues: MRAYELMVLIDPEVDERTVEPTLKKYLEVVTNAGGTVDNIDVWGRRKTAYEIQKKSEAIYVVVNFQSEPAATQELDRLLNLNETILRTKIIRPEEQKITAE.

Belongs to the bacterial ribosomal protein bS6 family.

Binds together with bS18 to 16S ribosomal RNA. This is Small ribosomal subunit protein bS6 from Micrococcus luteus (strain ATCC 4698 / DSM 20030 / JCM 1464 / CCM 169 / CCUG 5858 / IAM 1056 / NBRC 3333 / NCIMB 9278 / NCTC 2665 / VKM Ac-2230) (Micrococcus lysodeikticus).